Consider the following 183-residue polypeptide: ATP-dependent protease subunit HslV (183 aa).

Residue Thr2 is part of the active site. Na(+) contacts are provided by Ala157, Cys160, and Thr163.

Belongs to the peptidase T1B family. HslV subfamily. In terms of assembly, a double ring-shaped homohexamer of HslV is capped on each side by a ring-shaped HslU homohexamer. The assembly of the HslU/HslV complex is dependent on binding of ATP.

It localises to the cytoplasm. The catalysed reaction is ATP-dependent cleavage of peptide bonds with broad specificity.. Allosterically activated by HslU binding. Protease subunit of a proteasome-like degradation complex believed to be a general protein degrading machinery. In Marinomonas sp. (strain MWYL1), this protein is ATP-dependent protease subunit HslV.